The following is a 221-amino-acid chain: Large ribosomal subunit protein uL16A (221 aa).

It belongs to the universal ribosomal protein uL16 family. As to quaternary structure, component of the large ribosomal subunit (LSU). Mature yeast ribosomes consist of a small (40S) and a large (60S) subunit. The 40S small subunit contains 1 molecule of ribosomal RNA (18S rRNA) and at least 33 different proteins. The large 60S subunit contains 3 rRNA molecules (25S, 5.8S and 5S rRNA) and at least 46 different proteins.

Its subcellular location is the cytoplasm. Functionally, component of the ribosome, a large ribonucleoprotein complex responsible for the synthesis of proteins in the cell. The small ribosomal subunit (SSU) binds messenger RNAs (mRNAs) and translates the encoded message by selecting cognate aminoacyl-transfer RNA (tRNA) molecules. The large subunit (LSU) contains the ribosomal catalytic site termed the peptidyl transferase center (PTC), which catalyzes the formation of peptide bonds, thereby polymerizing the amino acids delivered by tRNAs into a polypeptide chain. The nascent polypeptides leave the ribosome through a tunnel in the LSU and interact with protein factors that function in enzymatic processing, targeting, and the membrane insertion of nascent chains at the exit of the ribosomal tunnel. The polypeptide is Large ribosomal subunit protein uL16A (rpl1001) (Schizosaccharomyces pombe (strain 972 / ATCC 24843) (Fission yeast)).